The chain runs to 116 residues: Large ribosomal subunit protein bL17 (116 aa).

It belongs to the bacterial ribosomal protein bL17 family. Part of the 50S ribosomal subunit. Contacts protein L32.

This is Large ribosomal subunit protein bL17 from Helicobacter acinonychis (strain Sheeba).